We begin with the raw amino-acid sequence, 161 residues long: MKKKYYISISLLMTFIVLVFDQVSKWLITISMKVGDSYEIIPNFLNITSHRNNGAAWGILSGKMLFFYIITIIILIVLVIFYIKEAQFNLFMQVAISLLFAGALGNFIDRVLHGEVVDFIDTNIFGYDFPIFNIADSSLTIGVIFVIITLIKDAIINKKEV.

3 consecutive transmembrane segments (helical) span residues 9 to 29 (ISLLMTFIVLVFDQVSKWLIT), 63 to 83 (KMLFFYIITIIILIVLVIFYI), and 88 to 108 (FNLFMQVAISLLFAGALGNFI). Catalysis depends on residues Asp118 and Asp136. Residues 131–151 (IFNIADSSLTIGVIFVIITLI) form a helical membrane-spanning segment.

This sequence belongs to the peptidase A8 family.

It is found in the cell membrane. It carries out the reaction Release of signal peptides from bacterial membrane prolipoproteins. Hydrolyzes -Xaa-Yaa-Zaa-|-(S,diacylglyceryl)Cys-, in which Xaa is hydrophobic (preferably Leu), and Yaa (Ala or Ser) and Zaa (Gly or Ala) have small, neutral side chains.. The protein operates within protein modification; lipoprotein biosynthesis (signal peptide cleavage). Its function is as follows. This protein specifically catalyzes the removal of signal peptides from prolipoproteins. This chain is Lipoprotein signal peptidase, found in Staphylococcus epidermidis (strain ATCC 35984 / DSM 28319 / BCRC 17069 / CCUG 31568 / BM 3577 / RP62A).